The following is a 466-amino-acid chain: Probable agmatine/putrescine antiporter AguD (466 aa).

12 consecutive transmembrane segments (helical) span residues Phe8–Ala28, Val30–Leu50, Ala85–Pro105, Ile120–Val140, Val144–Leu164, Leu192–Ala212, Ile226–Val246, Trp273–Trp293, Trp325–Leu345, Leu350–Phe370, Val398–Leu418, and Thr426–Ile446.

This sequence belongs to the amino acid-polyamine-organocation (APC) superfamily. Glutamate:GABA antiporter (GGA) (TC 2.A.3.7) family.

Its subcellular location is the cell membrane. Probably catalyzes agmatine/putrescine exchange. The protein is Probable agmatine/putrescine antiporter AguD of Lactococcus lactis subsp. lactis (strain IL1403) (Streptococcus lactis).